We begin with the raw amino-acid sequence, 247 residues long: tRNA pseudouridine synthase A (247 aa).

Aspartate 52 (nucleophile) is an active-site residue. Tyrosine 110 contacts substrate.

This sequence belongs to the tRNA pseudouridine synthase TruA family. As to quaternary structure, homodimer.

The enzyme catalyses uridine(38/39/40) in tRNA = pseudouridine(38/39/40) in tRNA. Formation of pseudouridine at positions 38, 39 and 40 in the anticodon stem and loop of transfer RNAs. In Geobacter sp. (strain M21), this protein is tRNA pseudouridine synthase A.